The chain runs to 1003 residues: DNA topoisomerase 3-alpha (1003 aa).

The Toprim domain maps to 35-179 (KVLCVAEKND…NLRVLRARFS (145 aa)). The 421-residue stretch at 197–617 (DQRVSDAVDV…QQVQKYKQVF (421 aa)) folds into the Topo IA-type catalytic domain. The active-site O-(5'-phospho-DNA)-tyrosine intermediate is tyrosine 362. The segment at 400–426 (GGPTPRNGSKSDQAHPPIHPTKYTSGL) is disordered. The C4-type zinc-finger motif lies at 658–685 (CPQCNKDMVLKTKKSGGFYLSCMGFPEC). Residues cysteine 815, cysteine 817, cysteine 840, and cysteine 845 each contribute to the Zn(2+) site. The GRF-type 1 zinc finger occupies 815–854 (CNCGREAVLLTVRKQGPNQGRHFYKCSNGDCNFFLWADSS). The interval 856-888 (STGGGTPTSASGPPGSSVGCPSSVGSHMDGFGS) is disordered. The span at 862-888 (PTSASGPPGSSVGCPSSVGSHMDGFGS) shows a compositional bias: low complexity. Zn(2+)-binding residues include cysteine 899, cysteine 901, cysteine 924, and cysteine 932. The segment at 899-941 (CLCGQPAVTRTVQKDGPNKGRQFHTCAKPREQQCGFFQWVDEN) adopts a GRF-type 2 zinc-finger fold. Residues 946–991 (SFAAPAWPGGRGKAQRPEAASKRPRAGSSDAGSTVKKPRKCSLCHQ) form a disordered region.

This sequence belongs to the type IA topoisomerase family. As to quaternary structure, binds ssDNA. Interacts (via N-terminal region) with BLM; the interaction is direct. Directly interacts with RMI1. Component of the RMI complex, containing at least TOP3A, RMI1 and RMI2. The RMI complex interacts with BLM. Mg(2+) serves as cofactor. As to expression, highly expressed in testis.

The protein resides in the mitochondrion matrix. The catalysed reaction is ATP-independent breakage of single-stranded DNA, followed by passage and rejoining.. Releases the supercoiling and torsional tension of DNA introduced during the DNA replication and transcription by transiently cleaving and rejoining one strand of the DNA duplex. Introduces a single-strand break via transesterification at a target site in duplex DNA. The scissile phosphodiester is attacked by the catalytic tyrosine of the enzyme, resulting in the formation of a DNA-(5'-phosphotyrosyl)-enzyme intermediate and the expulsion of a 3'-OH DNA strand. The free DNA strand then undergoes passage around the unbroken strand thus removing DNA supercoils. Finally, in the religation step, the DNA 3'-OH attacks the covalent intermediate to expel the active-site tyrosine and restore the DNA phosphodiester backbone. As an essential component of the RMI complex it is involved in chromosome separation and the processing of homologous recombination intermediates to limit DNA crossover formation in cells. Has DNA decatenation activity. It is required for mtDNA decatenation and segregation after completion of replication, in a process that does not require BLM, RMI1 and RMI2. This chain is DNA topoisomerase 3-alpha (Top3a), found in Mus musculus (Mouse).